Here is a 115-residue protein sequence, read N- to C-terminus: Cytochrome c oxidase subunit 3 (115 aa).

Helical transmembrane passes span 32–52 and 70–90; these read CLQGLLFTVLLGLYFSFLQGL and FFLATGFHGLHVLIGTIFLMI.

The protein belongs to the cytochrome c oxidase subunit 3 family. As to quaternary structure, component of the cytochrome c oxidase (complex IV, CIV), a multisubunit enzyme composed of a catalytic core of 3 subunits and several supernumerary subunits. The complex exists as a monomer or a dimer and forms supercomplexes (SCs) in the inner mitochondrial membrane with ubiquinol-cytochrome c oxidoreductase (cytochrome b-c1 complex, complex III, CIII).

The protein localises to the mitochondrion inner membrane. The catalysed reaction is 4 Fe(II)-[cytochrome c] + O2 + 8 H(+)(in) = 4 Fe(III)-[cytochrome c] + 2 H2O + 4 H(+)(out). In terms of biological role, component of the cytochrome c oxidase, the last enzyme in the mitochondrial electron transport chain which drives oxidative phosphorylation. The respiratory chain contains 3 multisubunit complexes succinate dehydrogenase (complex II, CII), ubiquinol-cytochrome c oxidoreductase (cytochrome b-c1 complex, complex III, CIII) and cytochrome c oxidase (complex IV, CIV), that cooperate to transfer electrons derived from NADH and succinate to molecular oxygen, creating an electrochemical gradient over the inner membrane that drives transmembrane transport and the ATP synthase. Cytochrome c oxidase is the component of the respiratory chain that catalyzes the reduction of oxygen to water. Electrons originating from reduced cytochrome c in the intermembrane space (IMS) are transferred via the dinuclear copper A center (CU(A)) of subunit 2 and heme A of subunit 1 to the active site in subunit 1, a binuclear center (BNC) formed by heme A3 and copper B (CU(B)). The BNC reduces molecular oxygen to 2 water molecules using 4 electrons from cytochrome c in the IMS and 4 protons from the mitochondrial matrix. The sequence is that of Cytochrome c oxidase subunit 3 (COIII) from Artemia salina (Brine shrimp).